The chain runs to 580 residues: Acyl--CoA ligase GME11374 (580 aa).

It belongs to the ATP-dependent AMP-binding enzyme family.

It participates in secondary metabolite biosynthesis. Acyl--CoA ligase; part of the gene cluster that mediates the biosynthesis of dibenzodioxocinones such as pestalotiollide B, a novel class of inhibitors against cholesterol ester transfer protein (CEPT). The biosynthesis initiates from condensation of acetate and malonate units catalyzed by the non-reducing PKS pks8/GME11356. Pks8/GME11356 lacks a thioesterase (TE) domain, which is important to the cyclizing of the third ring of atrochrysone carboxylic acid, and the esterase GME11355 might play the role of TE and catalyzes the cyclization reaction of the C ring. The lactamase-like protein GME11357 (or other beta-lactamases in Pestalotiopsis microspora) probably hydrolyzes the thioester bond between the ACP of pks8/GME11356 and the intermediate to release atrochrysone carboxylic acid, which is spontaneously dehydrates to form endocrocin anthrone. Endocrocin anthrone is further converted to emodin via the endocrocin intermediate. Emodin is then oxidized by several enzymes such as the Baeyer-Villiger oxidase GME11358, the oxidoreductase GME11367, the short chain dehydrogenase/reductase GME11373, as well as by other oxidoreductases from the cluster, to modify the A and C rings and open the B ring, and finally yield monodictyphenone. The prenyltransferase GME11375 may catalyze the addition reaction between the C5 side chains and the carbon bone of dibenzodioxocinones. The remaining biochemical reactions to the final product dibenzodioxocinones should be methylation catalyzed by methyltransferase GME11366 and reduction and lactonization reaction catalyzed by a series of oxidordeuctases. This Pestalotiopsis microspora protein is Acyl--CoA ligase GME11374.